We begin with the raw amino-acid sequence, 118 residues long: Holo-[acyl-carrier-protein] synthase (118 aa).

2 residues coordinate Mg(2+): Asp-5 and Glu-50.

It belongs to the P-Pant transferase superfamily. AcpS family. Requires Mg(2+) as cofactor.

It is found in the cytoplasm. The catalysed reaction is apo-[ACP] + CoA = holo-[ACP] + adenosine 3',5'-bisphosphate + H(+). In terms of biological role, transfers the 4'-phosphopantetheine moiety from coenzyme A to a Ser of acyl-carrier-protein. The polypeptide is Holo-[acyl-carrier-protein] synthase (Wolinella succinogenes (strain ATCC 29543 / DSM 1740 / CCUG 13145 / JCM 31913 / LMG 7466 / NCTC 11488 / FDC 602W) (Vibrio succinogenes)).